The sequence spans 335 residues: Adenine deaminase (335 aa).

Positions 17, 19, and 197 each coordinate Zn(2+). Catalysis depends on Glu-200, which acts as the Proton donor. Zn(2+) is bound at residue Asp-278. Asp-279 provides a ligand contact to substrate.

It belongs to the metallo-dependent hydrolases superfamily. Adenosine and AMP deaminases family. Adenine deaminase type 2 subfamily. Zn(2+) is required as a cofactor.

It carries out the reaction adenine + H2O + H(+) = hypoxanthine + NH4(+). Its function is as follows. Catalyzes the hydrolytic deamination of adenine to hypoxanthine. Plays an important role in the purine salvage pathway and in nitrogen catabolism. In Marinomonas sp. (strain MWYL1), this protein is Adenine deaminase.